Reading from the N-terminus, the 227-residue chain is Uracil-DNA glycosylase (227 aa).

The Proton acceptor role is filled by aspartate 68.

This sequence belongs to the uracil-DNA glycosylase (UDG) superfamily. UNG family.

It is found in the cytoplasm. It carries out the reaction Hydrolyzes single-stranded DNA or mismatched double-stranded DNA and polynucleotides, releasing free uracil.. Functionally, excises uracil residues from the DNA which can arise as a result of misincorporation of dUMP residues by DNA polymerase or due to deamination of cytosine. This Mycolicibacterium smegmatis (strain ATCC 700084 / mc(2)155) (Mycobacterium smegmatis) protein is Uracil-DNA glycosylase.